The sequence spans 552 residues: uncharacterized protein (552 aa).

29-36 (GENAWGKS) provides a ligand contact to ATP. In terms of domain architecture, Toprim spans 379–469 (RCWLLVEGET…AEREHLTALP (91 aa)).

This is an uncharacterized protein from Escherichia coli (strain K12).